The following is a 220-amino-acid chain: Probable GTP-binding protein EngB (220 aa).

An EngB-type G domain is found at 26–200 (EGIEIAFAGR…RAKLDEWYAP (175 aa)). GTP contacts are provided by residues 34-41 (GRSNTGKS), 61-65 (GRTQL), 79-82 (DLPG), 146-149 (TKAD), and 179-181 (FSS). Mg(2+) contacts are provided by Ser41 and Thr63.

It belongs to the TRAFAC class TrmE-Era-EngA-EngB-Septin-like GTPase superfamily. EngB GTPase family. The cofactor is Mg(2+).

Functionally, necessary for normal cell division and for the maintenance of normal septation. This chain is Probable GTP-binding protein EngB, found in Vibrio cholerae serotype O1 (strain ATCC 39541 / Classical Ogawa 395 / O395).